The sequence spans 153 residues: MAWFRPPPPHTQLRPWVPDAIFIPISRAVERVGVFFYNRVLNKTEVGLFDKRWNKNVHGPYCHWRYYGKLDTKFMDVKLGDLPAWMARREKTPSAFYNEFMRNIWRVHNLYYSGPVYNNTVKVIFRFIFAYSFLNWLVKSHRYVDFQKTMYHW.

Belongs to the ATPase F chain family. As to quaternary structure, subunit of the F-type ATPase which has 2 components, CF(1) - the catalytic core - and CF(0) - the membrane proton channel.

The protein localises to the mitochondrion membrane. Its function is as follows. Mitochondrial membrane ATP synthase (F(1)F(0) ATP synthase or Complex V) produces ATP from ADP in the presence of a proton gradient across the membrane which is generated by electron transport complexes of the respiratory chain. F-type ATPases consist of two structural domains, F(1) - containing the extramembraneous catalytic core and F(0) - containing the membrane proton channel, linked together by a central stalk and a peripheral stalk. During catalysis, ATP synthesis in the catalytic domain of F(1) is coupled via a rotary mechanism of the central stalk subunits to proton translocation. Part of the complex F(0) domain. Minor subunit located with subunit a in the membrane. This Caenorhabditis elegans protein is Putative ATP synthase subunit f, mitochondrial.